Here is a 234-residue protein sequence, read N- to C-terminus: 7-carboxy-7-deazaguanine synthase (234 aa).

The disordered stretch occupies residues 1–28 (MPLNCDTKTAGEISSSIPSGSGSHQPAA). Positions 13–23 (ISSSIPSGSGS) are enriched in low complexity. Residues 42 to 44 (LQG) and arginine 57 contribute to the substrate site. One can recognise a Radical SAM core domain in the interval 48–234 (TSGYPTIFIR…LQLHKFIGLP (187 aa)). [4Fe-4S] cluster is bound by residues cysteine 61, cysteine 65, and cysteine 68. Threonine 70 contacts Mg(2+). Residue threonine 100 coordinates substrate. Glycine 102 is a binding site for S-adenosyl-L-methionine. Substrate is bound at residue proline 234.

This sequence belongs to the radical SAM superfamily. 7-carboxy-7-deazaguanine synthase family. In terms of assembly, homodimer. The cofactor is [4Fe-4S] cluster. S-adenosyl-L-methionine is required as a cofactor. It depends on Mg(2+) as a cofactor.

It carries out the reaction 6-carboxy-5,6,7,8-tetrahydropterin + H(+) = 7-carboxy-7-deazaguanine + NH4(+). It functions in the pathway purine metabolism; 7-cyano-7-deazaguanine biosynthesis. Functionally, catalyzes the complex heterocyclic radical-mediated conversion of 6-carboxy-5,6,7,8-tetrahydropterin (CPH4) to 7-carboxy-7-deazaguanine (CDG), a step common to the biosynthetic pathways of all 7-deazapurine-containing compounds. The sequence is that of 7-carboxy-7-deazaguanine synthase from Methanospirillum hungatei JF-1 (strain ATCC 27890 / DSM 864 / NBRC 100397 / JF-1).